We begin with the raw amino-acid sequence, 250 residues long: DNA repair protein RecO (250 aa).

Belongs to the RecO family.

Involved in DNA repair and RecF pathway recombination. This is DNA repair protein RecO from Staphylococcus aureus (strain Mu3 / ATCC 700698).